The primary structure comprises 237 residues: Large ribosomal subunit protein uL1 (237 aa).

The protein belongs to the universal ribosomal protein uL1 family. Part of the 50S ribosomal subunit.

Functionally, binds directly to 23S rRNA. The L1 stalk is quite mobile in the ribosome, and is involved in E site tRNA release. Its function is as follows. Protein L1 is also a translational repressor protein, it controls the translation of the L11 operon by binding to its mRNA. This is Large ribosomal subunit protein uL1 from Myxococcus xanthus (strain DK1622).